Here is a 629-residue protein sequence, read N- to C-terminus: tRNA uridine 5-carboxymethylaminomethyl modification enzyme MnmG (629 aa).

FAD is bound by residues 13-18 (GGGHAG), V125, and S180. 273–287 (GPRYCPSIEDKVMRF) contributes to the NAD(+) binding site. FAD is bound at residue Q370.

The protein belongs to the MnmG family. In terms of assembly, homodimer. Heterotetramer of two MnmE and two MnmG subunits. It depends on FAD as a cofactor.

Its subcellular location is the cytoplasm. In terms of biological role, NAD-binding protein involved in the addition of a carboxymethylaminomethyl (cmnm) group at the wobble position (U34) of certain tRNAs, forming tRNA-cmnm(5)s(2)U34. This is tRNA uridine 5-carboxymethylaminomethyl modification enzyme MnmG from Escherichia coli O139:H28 (strain E24377A / ETEC).